Consider the following 443-residue polypeptide: Serine/threonine-protein phosphatase 2A 55 kDa regulatory subunit B beta isoform (443 aa).

WD repeat units lie at residues 22-61 (TEAD…KSQP), 87-128 (EIEE…KRPE), 171-209 (AHTY…RSFN), 220-260 (ELTE…LCDN), 279-317 (EIIS…KPLE), 334-375 (ENDC…DVTL), and 410-443 (DFSK…DKVN).

Belongs to the phosphatase 2A regulatory subunit B family. PP2A consists of a common heterodimeric core enzyme, composed of a 36 kDa catalytic subunit (subunit C) and a 65 kDa constant regulatory subunit (PR65 or subunit A), that associates with a variety of regulatory subunits.

The protein localises to the cytoplasm. It is found in the cytoskeleton. The protein resides in the membrane. The B regulatory subunit might modulate substrate selectivity and catalytic activity, and might also direct the localization of the catalytic enzyme to a particular subcellular compartment. In Carassius auratus (Goldfish), this protein is Serine/threonine-protein phosphatase 2A 55 kDa regulatory subunit B beta isoform (ppp2r2b).